Here is a 677-residue protein sequence, read N- to C-terminus: Methionine--tRNA ligase (677 aa).

Residues 15–25 (PYANGSIHLGH) carry the 'HIGH' region motif. Zn(2+) is bound by residues Cys-146, Cys-149, Cys-159, and Cys-162. The 'KMSKS' region motif lies at 333–337 (KMSKS). Lys-336 is an ATP binding site. The 103-residue stretch at 575 to 677 (DFAKVDLRVA…AGAKPGHQVK (103 aa)) folds into the tRNA-binding domain.

Belongs to the class-I aminoacyl-tRNA synthetase family. MetG type 1 subfamily. In terms of assembly, homodimer. Zn(2+) is required as a cofactor.

The protein localises to the cytoplasm. The catalysed reaction is tRNA(Met) + L-methionine + ATP = L-methionyl-tRNA(Met) + AMP + diphosphate. Functionally, is required not only for elongation of protein synthesis but also for the initiation of all mRNA translation through initiator tRNA(fMet) aminoacylation. The protein is Methionine--tRNA ligase of Escherichia coli O6:K15:H31 (strain 536 / UPEC).